The sequence spans 250 residues: Aquaporin TIP2-2 (250 aa).

Helical transmembrane passes span 22-42 and 54-74; these read VAEFIATLLFVFAGVGSAIAF and AGLVAIAVAHALALFVGVSVA. The NPA 1 signature appears at 83-85; that stretch reads NPA. Helical transmembrane passes span 97–119, 142–162, and 169–189; these read TVLTGLFYWVAQLLGASVACLLL, GVVFEIVITFALVYTVYATAA, and LGTIAPIAIGFIVGANILAAG. Positions 197-199 match the NPA 2 motif; it reads NPA. The helical transmembrane segment at 218-238 threads the bilayer; that stretch reads WVGPLIGGGLAGLVYGDVFIG.

The protein belongs to the MIP/aquaporin (TC 1.A.8) family. TIP (TC 1.A.8.10) subfamily.

The protein localises to the vacuole membrane. Aquaporins facilitate the transport of water and small neutral solutes across cell membranes. This is Aquaporin TIP2-2 (TIP2-2) from Zea mays (Maize).